The following is a 469-amino-acid chain: 3-isopropylmalate dehydratase large subunit (469 aa).

[4Fe-4S] cluster contacts are provided by cysteine 347, cysteine 407, and cysteine 410.

It belongs to the aconitase/IPM isomerase family. LeuC type 1 subfamily. As to quaternary structure, heterodimer of LeuC and LeuD. [4Fe-4S] cluster is required as a cofactor.

It carries out the reaction (2R,3S)-3-isopropylmalate = (2S)-2-isopropylmalate. It functions in the pathway amino-acid biosynthesis; L-leucine biosynthesis; L-leucine from 3-methyl-2-oxobutanoate: step 2/4. In terms of biological role, catalyzes the isomerization between 2-isopropylmalate and 3-isopropylmalate, via the formation of 2-isopropylmaleate. The chain is 3-isopropylmalate dehydratase large subunit from Sorangium cellulosum (strain So ce56) (Polyangium cellulosum (strain So ce56)).